Here is a 236-residue protein sequence, read N- to C-terminus: Ureidoacrylate amidohydrolase RutB (236 aa).

The Proton acceptor role is filled by aspartate 24. The active site involves lysine 133. Cysteine 166 serves as the catalytic Nucleophile.

It belongs to the isochorismatase family. RutB subfamily.

The enzyme catalyses (Z)-3-ureidoacrylate + H2O + H(+) = (Z)-3-aminoacrylate + NH4(+) + CO2. It carries out the reaction (Z)-3-ureidoacrylate + H2O = (Z)-3-aminoacrylate + carbamate + H(+). It catalyses the reaction (Z)-2-methylureidoacrylate + H2O + H(+) = (Z)-2-methylaminoacrylate + NH4(+) + CO2. Hydrolyzes ureidoacrylate to form aminoacrylate and carbamate. The carbamate hydrolyzes spontaneously, thereby releasing one of the nitrogen atoms of the pyrimidine ring as ammonia and one of its carbon atoms as CO2. The chain is Ureidoacrylate amidohydrolase RutB from Klebsiella pneumoniae subsp. pneumoniae (strain ATCC 700721 / MGH 78578).